We begin with the raw amino-acid sequence, 301 residues long: GTPase Era (301 aa).

One can recognise an Era-type G domain in the interval 7 to 175 (YCGFIAIVGR…AGIVRKHLPE (169 aa)). Residues 15 to 22 (GRPNVGKS) are G1. Position 15–22 (15–22 (GRPNVGKS)) interacts with GTP. A G2 region spans residues 41–45 (QTTRH). The interval 62–65 (DTPG) is G3. GTP is bound by residues 62–66 (DTPGL) and 124–127 (NKVD). Residues 124–127 (NKVD) are G4. Residues 154–156 (LSA) form a G5 region. A KH type-2 domain is found at 198–283 (IREKLMRFLG…HLELWVKVKS (86 aa)).

It belongs to the TRAFAC class TrmE-Era-EngA-EngB-Septin-like GTPase superfamily. Era GTPase family. In terms of assembly, monomer.

It is found in the cytoplasm. Its subcellular location is the cell inner membrane. Functionally, an essential GTPase that binds both GDP and GTP, with rapid nucleotide exchange. Plays a role in 16S rRNA processing and 30S ribosomal subunit biogenesis and possibly also in cell cycle regulation and energy metabolism. The protein is GTPase Era of Enterobacter sp. (strain 638).